We begin with the raw amino-acid sequence, 119 residues long: Large ribosomal subunit protein uL18 (119 aa).

The disordered stretch occupies residues 54-76; it reads LTSASTLADDVEGETPTEESRSV.

It belongs to the universal ribosomal protein uL18 family. In terms of assembly, part of the 50S ribosomal subunit; part of the 5S rRNA/L5/L18/L25 subcomplex. Contacts the 5S and 23S rRNAs.

In terms of biological role, this is one of the proteins that bind and probably mediate the attachment of the 5S RNA into the large ribosomal subunit, where it forms part of the central protuberance. This Salinibacter ruber (strain DSM 13855 / M31) protein is Large ribosomal subunit protein uL18.